The primary structure comprises 371 residues: Putative glutamate--cysteine ligase 2 (371 aa).

It belongs to the glutamate--cysteine ligase type 2 family. YbdK subfamily.

It catalyses the reaction L-cysteine + L-glutamate + ATP = gamma-L-glutamyl-L-cysteine + ADP + phosphate + H(+). Functionally, ATP-dependent carboxylate-amine ligase which exhibits weak glutamate--cysteine ligase activity. This is Putative glutamate--cysteine ligase 2 from Paraburkholderia phytofirmans (strain DSM 17436 / LMG 22146 / PsJN) (Burkholderia phytofirmans).